The sequence spans 439 residues: 3-phosphoshikimate 1-carboxyvinyltransferase (439 aa).

Positions 27, 28, and 32 each coordinate 3-phosphoshikimate. Phosphoenolpyruvate is bound at residue Lys27. Phosphoenolpyruvate contacts are provided by Gly101 and Arg130. 3-phosphoshikimate is bound by residues Ser175, Gln177, Asp326, and Lys353. Gln177 is a binding site for phosphoenolpyruvate. Catalysis depends on Asp326, which acts as the Proton acceptor. The phosphoenolpyruvate site is built by Arg357 and Arg399.

This sequence belongs to the EPSP synthase family. As to quaternary structure, monomer.

It is found in the cytoplasm. The enzyme catalyses 3-phosphoshikimate + phosphoenolpyruvate = 5-O-(1-carboxyvinyl)-3-phosphoshikimate + phosphate. It functions in the pathway metabolic intermediate biosynthesis; chorismate biosynthesis; chorismate from D-erythrose 4-phosphate and phosphoenolpyruvate: step 6/7. In terms of biological role, catalyzes the transfer of the enolpyruvyl moiety of phosphoenolpyruvate (PEP) to the 5-hydroxyl of shikimate-3-phosphate (S3P) to produce enolpyruvyl shikimate-3-phosphate and inorganic phosphate. This Synechococcus sp. (strain WH7803) protein is 3-phosphoshikimate 1-carboxyvinyltransferase.